We begin with the raw amino-acid sequence, 488 residues long: GTPase Der (488 aa).

2 EngA-type G domains span residues 3 to 166 and 201 to 374; these read PVVA…VSDG and IKLA…QCAT. GTP is bound by residues 9 to 16, 56 to 60, 118 to 121, 207 to 214, 254 to 258, and 319 to 322; these read GRPNVGKS, DTGGI, NKTD, DTAGV, and NKWD. Positions 375 to 459 constitute a KH-like domain; the sequence is KRVSTALLTR…PIRIQFNEGA (85 aa).

The protein belongs to the TRAFAC class TrmE-Era-EngA-EngB-Septin-like GTPase superfamily. EngA (Der) GTPase family. In terms of assembly, associates with the 50S ribosomal subunit.

Functionally, GTPase that plays an essential role in the late steps of ribosome biogenesis. The polypeptide is GTPase Der (Sodalis glossinidius (strain morsitans)).